Consider the following 338-residue polypeptide: Heme A synthase (338 aa).

Helical transmembrane passes span 6–26 (ITKWLSISCIMVIAMIVIGGI), 93–113 (GRITALIYIVPLIYFYFKGII), 118–138 (IAPYIIALLLLYVQGFMGWYM), 154–174 (LAFHLIIAVIIYHILFYQLIK), and 201–221 (VIYLQIFLGALVAGLDAGLIY). His256 lines the heme pocket. 3 helical membrane passes run 258–278 (LGGYSVFLVVMALATYLLKIE), 285–305 (IAYFLIIALLMQISTGIITLL), and 308–328 (VPIIIASTHQFFAIVLLSVII). His316 lines the heme pocket.

It belongs to the COX15/CtaA family. Type 2 subfamily. In terms of assembly, interacts with CtaB. Heme b serves as cofactor.

Its subcellular location is the cell membrane. It catalyses the reaction Fe(II)-heme o + 2 A + H2O = Fe(II)-heme a + 2 AH2. Its pathway is porphyrin-containing compound metabolism; heme A biosynthesis; heme A from heme O: step 1/1. Catalyzes the conversion of heme O to heme A by two successive hydroxylations of the methyl group at C8. The first hydroxylation forms heme I, the second hydroxylation results in an unstable dihydroxymethyl group, which spontaneously dehydrates, resulting in the formyl group of heme A. The protein is Heme A synthase of Rickettsia canadensis (strain McKiel).